The chain runs to 269 residues: Glutamate racemase (269 aa).

Residues 11 to 12 (DS) and 43 to 44 (YG) contribute to the substrate site. The active-site Proton donor/acceptor is the Cys74. 75-76 (NT) contributes to the substrate binding site. Catalysis depends on Cys185, which acts as the Proton donor/acceptor. Position 186 to 187 (186 to 187 (TH)) interacts with substrate.

Belongs to the aspartate/glutamate racemases family.

The catalysed reaction is L-glutamate = D-glutamate. The protein operates within cell wall biogenesis; peptidoglycan biosynthesis. Provides the (R)-glutamate required for cell wall biosynthesis. This chain is Glutamate racemase, found in Bacillus cereus (strain G9842).